Here is a 219-residue protein sequence, read N- to C-terminus: Albonoursin synthase (219 aa).

This sequence belongs to the nitroreductase family. Homomer. Requires FMN as cofactor. In terms of processing, the N-terminus is blocked.

Its subcellular location is the cytoplasm. The catalysed reaction is cyclo(L-phenylalanyl-L-leucyl) + 2 O2 = albonoursin + 2 H2O2. In terms of biological role, involved in the biosynthesis of albonoursin (cyclo[(alpha,beta-dehydro-Phe)-(alpha,beta-dehydro-Leu)]), an antibacterial peptide. Catalyzes the formation of alpha,beta-dehydro-Phe (DPhe) and alpha,beta-dehydro-Leu (DLeu) residues during the biosynthesis of albonoursin. The catalytic reaction of cyclo(L-Phe-L-Leu) occurs in a two-step sequential alpha-beta-dehydrogenation leading first to cyclo(alpha,beta-dehydro-Phe-L-Leu) and finally to albonoursin. Can also use cyclo(L-Phe-L-His), cyclo(L-Trp-L-Trp), cyclo(L-Leu-L-Ala), cyclo(L-Phe-Gly), cyclo(L-Leu-Gly), cyclo(L-Ser-Gly) and cyclo(L-Glu-Gly) as substrate suggesting that the diketopiperazine ring is essential for the enzymatic reaction. This chain is Albonoursin synthase (albA), found in Streptomyces noursei (Streptomyces albulus).